The following is a 614-amino-acid chain: Nuclear receptor subfamily 1 group D member 1 (614 aa).

Residues M1 to C48 are compositionally biased toward polar residues. A required for phosphorylation by CSNK1E and cytoplasmic localization region spans residues M1–S70. Residues M1–T120 are disordered. The modulating stretch occupies residues M1–M129. Residues P49 to T285 form a crucial for activation of GJA1 region. Residues S55 and S59 each carry the phosphoserine; by GSK3-beta modification. A compositionally biased stretch (low complexity) spans G69–G103. Positions V130–F206 form a DNA-binding region, nuclear receptor. 2 NR C4-type zinc fingers span residues C133 to C153 and C170 to C194. N6-acetyllysine; by KAT5 is present on residues K192 and K193. The segment at S233–V286 is disordered. The span at E239–S262 shows a compositional bias: pro residues. T275 is modified (phosphothreonine; by CDK1). The region spanning T285–Q614 is the NR LBD domain. Heme is bound at residue C418. The residue at position 591 (K591) is an N6-acetyllysine. H602 provides a ligand contact to heme.

The protein belongs to the nuclear hormone receptor family. NR1 subfamily. Binds DNA as a monomer or a homodimer. Interacts with C1D, NR2E3, SP1 and ZNHIT1. Interacts with OPHN1 (via C-terminus). Interacts with PER2; the interaction associates PER2 to BMAL1 promoter region. Interacts with CRY1. Interacts with CCAR2. Interacts with SIAH2. Interacts with FBXW7 and CDK1. Interacts with HUWE1. Interacts with NR0B2. Interacts with NFIL3. Interacts (via domain NR LBD) with HSP90AA1 and HSP90AB1. In terms of processing, ubiquitinated, leading to its proteasomal degradation. Ubiquitinated by the SCF(FBXW7) complex when phosphorylated by CDK1 leading to its proteasomal degradation. Ubiquitinated by SIAH2; leading to its proteasomal degradation. Rapidly ubiquitinated in response to inflammatory triggers and sumoylation is a prerequisite to its ubiquitination. Sumoylated by UBE2I, desumoylated by SENP1, and sumoylation is a prerequisite to its ubiquitination. Post-translationally, phosphorylated by CSNK1E; phosphorylation enhances its cytoplasmic localization. In terms of processing, undergoes lysosome-mediated degradation in a time-dependent manner in the liver. As to expression, expressed in all tissues and cell lines examined. Expressed at high levels in some squamous carcinoma cell lines.

It is found in the nucleus. It localises to the cytoplasm. The protein localises to the cell projection. Its subcellular location is the dendrite. The protein resides in the dendritic spine. In terms of biological role, transcriptional repressor which coordinates circadian rhythm and metabolic pathways in a heme-dependent manner. Integral component of the complex transcription machinery that governs circadian rhythmicity and forms a critical negative limb of the circadian clock by directly repressing the expression of core clock components BMAL1, CLOCK and CRY1. Also regulates genes involved in metabolic functions, including lipid and bile acid metabolism, adipogenesis, gluconeogenesis and the macrophage inflammatory response. Acts as a receptor for heme which stimulates its interaction with the NCOR1/HDAC3 corepressor complex, enhancing transcriptional repression. Recognizes two classes of DNA response elements within the promoter of its target genes and can bind to DNA as either monomers or homodimers, depending on the nature of the response element. Binds as a monomer to a response element composed of the consensus half-site motif 5'-[A/G]GGTCA-3' preceded by an A/T-rich 5' sequence (RevRE), or as a homodimer to a direct repeat of the core motif spaced by two nucleotides (RevDR-2). Acts as a potent competitive repressor of ROR alpha (RORA) function and regulates the levels of its ligand heme by repressing the expression of PPARGC1A, a potent inducer of heme synthesis. Regulates lipid metabolism by repressing the expression of APOC3 and by influencing the activity of sterol response element binding proteins (SREBPs); represses INSIG2 which interferes with the proteolytic activation of SREBPs which in turn govern the rhythmic expression of enzymes with key functions in sterol and fatty acid synthesis. Regulates gluconeogenesis via repression of G6PC1 and PEPCK and adipocyte differentiation via repression of PPARG. Regulates glucagon release in pancreatic alpha-cells via the AMPK-NAMPT-SIRT1 pathway and the proliferation, glucose-induced insulin secretion and expression of key lipogenic genes in pancreatic-beta cells. Positively regulates bile acid synthesis by increasing hepatic expression of CYP7A1 via repression of NR0B2 and NFIL3 which are negative regulators of CYP7A1. Modulates skeletal muscle oxidative capacity by regulating mitochondrial biogenesis and autophagy; controls mitochondrial biogenesis and respiration by interfering with the STK11-PRKAA1/2-SIRT1-PPARGC1A signaling pathway. Represses the expression of SERPINE1/PAI1, an important modulator of cardiovascular disease and the expression of inflammatory cytokines and chemokines in macrophages. Represses gene expression at a distance in macrophages by inhibiting the transcription of enhancer-derived RNAs (eRNAs). Plays a role in the circadian regulation of body temperature and negatively regulates thermogenic transcriptional programs in brown adipose tissue (BAT); imposes a circadian oscillation in BAT activity, increasing body temperature when awake and depressing thermogenesis during sleep. In concert with NR2E3, regulates transcriptional networks critical for photoreceptor development and function. In addition to its activity as a repressor, can also act as a transcriptional activator. In the ovarian granulosa cells acts as a transcriptional activator of STAR which plays a role in steroid biosynthesis. In collaboration with SP1, activates GJA1 transcription in a heme-independent manner. Represses the transcription of CYP2B10, CYP4A10 and CYP4A14. Represses the transcription of CES2. Represses and regulates the circadian expression of TSHB in a NCOR1-dependent manner. Negatively regulates the protein stability of NR3C1 and influences the time-dependent subcellular distribution of NR3C1, thereby affecting its transcriptional regulatory activity. Plays a critical role in the circadian control of neutrophilic inflammation in the lung; under resting, non-stress conditions, acts as a rhythmic repressor to limit inflammatory activity whereas in the presence of inflammatory triggers undergoes ubiquitin-mediated degradation thereby relieving inhibition of the inflammatory response. Plays a key role in the circadian regulation of microglial activation and neuroinflammation; suppresses microglial activation through the NF-kappaB pathway in the central nervous system. Plays a role in the regulation of the diurnal rhythms of lipid and protein metabolism in the skeletal muscle via transcriptional repression of genes controlling lipid and amino acid metabolism in the muscle. The chain is Nuclear receptor subfamily 1 group D member 1 (NR1D1) from Ovis aries (Sheep).